The following is a 98-amino-acid chain: Aspartyl/glutamyl-tRNA(Asn/Gln) amidotransferase subunit C (98 aa).

This sequence belongs to the GatC family. Heterotrimer of A, B and C subunits.

It carries out the reaction L-glutamyl-tRNA(Gln) + L-glutamine + ATP + H2O = L-glutaminyl-tRNA(Gln) + L-glutamate + ADP + phosphate + H(+). It catalyses the reaction L-aspartyl-tRNA(Asn) + L-glutamine + ATP + H2O = L-asparaginyl-tRNA(Asn) + L-glutamate + ADP + phosphate + 2 H(+). Allows the formation of correctly charged Asn-tRNA(Asn) or Gln-tRNA(Gln) through the transamidation of misacylated Asp-tRNA(Asn) or Glu-tRNA(Gln) in organisms which lack either or both of asparaginyl-tRNA or glutaminyl-tRNA synthetases. The reaction takes place in the presence of glutamine and ATP through an activated phospho-Asp-tRNA(Asn) or phospho-Glu-tRNA(Gln). The protein is Aspartyl/glutamyl-tRNA(Asn/Gln) amidotransferase subunit C of Gloeothece citriformis (strain PCC 7424) (Cyanothece sp. (strain PCC 7424)).